Consider the following 475-residue polypeptide: Lipoprotein lipase (475 aa).

Residues 1–27 (MESKALLVLTLAVWLQSLTASRGGVAA) form the signal peptide. The tract at residues 32-53 (RDFIDIESKFALRTPEDTAEDT) is interaction with GPIHBP1. Cys-54 and Cys-67 form a disulfide bridge. Asn-70 carries an N-linked (GlcNAc...) asparagine glycan. At Tyr-121 the chain carries 3'-nitrotyrosine. Ser-159 functions as the Nucleophile in the catalytic mechanism. Asp-183 functions as the Charge relay system in the catalytic mechanism. At Tyr-191 the chain carries 3'-nitrotyrosine. Residues Ala-194, Arg-197, Ser-199, and Asp-202 each coordinate Ca(2+). A disulfide bridge connects residues Cys-243 and Cys-266. Positions 243–266 (CNIGEAIRVIAERGLGDVDQLVKC) are essential for determining substrate specificity. His-268 functions as the Charge relay system in the catalytic mechanism. 2 disulfides stabilise this stretch: Cys-291–Cys-310 and Cys-302–Cys-305. The 124-residue stretch at 341–464 (FHYQVKIHFS…KGKAPAVFVK (124 aa)) folds into the PLAT domain. Tyr-343 carries the post-translational modification 3'-nitrotyrosine. N-linked (GlcNAc...) asparagine glycosylation is present at Asn-386. Residues 417 to 421 (WSDWW) form an important for interaction with lipoprotein particles region. An important for heparin binding region spans residues 430–434 (KIRVK). An interaction with GPIHBP1 region spans residues 443 to 467 (IFCSREKVSHLQKGKAPAVFVKCHD). Cys-445 and Cys-465 are disulfide-bonded.

This sequence belongs to the AB hydrolase superfamily. Lipase family. As to quaternary structure, homodimer. Interacts with GPIHBP1 with 1:1 stoichiometry. Interacts with APOC2; the interaction activates LPL activity in the presence of lipids. Interaction with heparan sulfate proteoglycans is required to protect LPL against loss of activity. Associates with lipoprotein particles in blood plasma. Interacts with LMF1 and SEL1L; interaction with SEL1L is required to prevent aggregation of newly synthesized LPL in the endoplasmic reticulum (ER), and for normal export of LPL from the ER to the extracellular space. Interacts with SORL1; SORL1 acts as a sorting receptor, promoting LPL localization to endosomes and later to lysosomes, leading to degradation of newly synthesized LPL. In terms of processing, tyrosine nitration after lipopolysaccharide (LPS) challenge down-regulates the lipase activity. In terms of tissue distribution, detected in blood plasma. Detected in milk (at protein level).

It is found in the cell membrane. The protein localises to the secreted. The protein resides in the extracellular space. Its subcellular location is the extracellular matrix. It catalyses the reaction a triacylglycerol + H2O = a diacylglycerol + a fatty acid + H(+). It carries out the reaction a 1,2-diacyl-sn-glycero-3-phosphocholine + H2O = a 2-acyl-sn-glycero-3-phosphocholine + a fatty acid + H(+). The catalysed reaction is 1,2,3-tri-(9Z-octadecenoyl)-glycerol + H2O = di-(9Z)-octadecenoylglycerol + (9Z)-octadecenoate + H(+). The enzyme catalyses 1,2-di-(9Z-octadecenoyl)-sn-glycero-3-phosphocholine + H2O = (9Z-octadecenoyl)-sn-glycero-3-phosphocholine + (9Z)-octadecenoate + H(+). It catalyses the reaction 1,2,3-tributanoylglycerol + H2O = dibutanoylglycerol + butanoate + H(+). It carries out the reaction 1,2-dihexadecanoyl-sn-glycero-3-phosphocholine + H2O = hexadecanoyl-sn-glycero-3-phosphocholine + hexadecanoate + H(+). With respect to regulation, the apolipoprotein APOC2 acts as a coactivator of LPL activity. Ca(2+) binding promotes protein stability and formation of the active homodimer. Interaction with GPIHBP1 protects LPL against inactivation by ANGPTL4. Inhibited by NaCl. Functionally, key enzyme in triglyceride metabolism. Catalyzes the hydrolysis of triglycerides from circulating chylomicrons and very low density lipoproteins (VLDL), and thereby plays an important role in lipid clearance from the blood stream, lipid utilization and storage. Although it has both phospholipase and triglyceride lipase activities it is primarily a triglyceride lipase with low but detectable phospholipase activity. Mediates margination of triglyceride-rich lipoprotein particles in capillaries. Recruited to its site of action on the luminal surface of vascular endothelium by binding to GPIHBP1 and cell surface heparan sulfate proteoglycans. The chain is Lipoprotein lipase (LPL) from Homo sapiens (Human).